Consider the following 25-residue polypeptide: Chitinolytic alpha-amylase inhibitor PvCAI (25 aa).

Homodimer.

The catalysed reaction is Random endo-hydrolysis of N-acetyl-beta-D-glucosaminide (1-&gt;4)-beta-linkages in chitin and chitodextrins.. Functionally, alpha-amylase inhibitor, active against Z.subfasciatus alpha-amylase (ZSA) but not porcine pancreatic alpha-amylase (PPA). Has chitinase activity. The polypeptide is Chitinolytic alpha-amylase inhibitor PvCAI (Phaseolus vulgaris (Kidney bean)).